Here is a 304-residue protein sequence, read N- to C-terminus: tRNA-uridine aminocarboxypropyltransferase 1 (304 aa).

N-acetylserine is present on Ser2. A DXTW motif is present at residues 206–209; the sequence is DSTW.

The protein belongs to the TDD superfamily. DTWD1 family.

It localises to the nucleus. It carries out the reaction a uridine in tRNA + S-adenosyl-L-methionine = a 3-[(3S)-3-amino-3-carboxypropyl]uridine in tRNA + S-methyl-5'-thioadenosine + H(+). In terms of biological role, catalyzes the formation of 3-(3-amino-3-carboxypropyl)uridine (acp3U) at position 20 in the D-loop of several cytoplasmic tRNAs (acp3U(20)). This is tRNA-uridine aminocarboxypropyltransferase 1 from Homo sapiens (Human).